The primary structure comprises 1323 residues: uncharacterized protein (1323 aa).

The segment covering 1–11 (MRELQGDDSSR) has biased composition (basic and acidic residues). Disordered stretches follow at residues 1–57 (MREL…SSYY) and 79–112 (IHES…HSET). A compositionally biased stretch (low complexity) spans 12–21 (KSPPSDSVVK). Ser-24 is modified (phosphoserine). Positions 27–40 (DYEHSLKSLQDERT) are enriched in basic and acidic residues. 2 stretches are compositionally biased toward polar residues: residues 42-57 (NYPN…SSYY) and 80-105 (HESS…SSTI). 6 WD repeats span residues 271–314 (RHST…DRAI), 320–360 (GHTR…FPVN), 364–403 (DWHN…APLH), 409–449 (ENIT…EEPE), 453–494 (TTDS…KEGP), and 502–551 (GHTD…LNSM). An RWD domain is found at 671-779 (EELSWIGQKY…SYLSGNLSVD (109 aa)). Residues 879-888 (SNSVADSDST) are compositionally biased toward polar residues. A disordered region spans residues 879 to 904 (SNSVADSDSTNYDDENSLNRGGTSES). The RING-type; degenerate zinc-finger motif lies at 1265–1309 (CTFCCLSIHGLCIVCGLCLHVMHEDCYKEWFSNGDSISQSCSSGC).

The protein belongs to the WD repeat WDR59 family.

Functionally, may be involved in telomere capping. This is an uncharacterized protein from Schizosaccharomyces pombe (strain 972 / ATCC 24843) (Fission yeast).